The primary structure comprises 358 residues: Tyrosinase ustQ (358 aa).

Residue N28 is glycosylated (N-linked (GlcNAc...) asparagine). Residues 37–57 (FVPVYAGLTIISLITVTVSLV) traverse the membrane as a helical segment. N91 and N109 each carry an N-linked (GlcNAc...) asparagine glycan. Residues H128 and H137 each contribute to the Cu cation site. N-linked (GlcNAc...) asparagine glycosylation is found at N172 and N214. Cu cation is bound by residues H266, H270, and H292. Residues N321 and N325 are each glycosylated (N-linked (GlcNAc...) asparagine).

It belongs to the tyrosinase family. Cu(2+) serves as cofactor.

It is found in the membrane. The catalysed reaction is 2 L-dopa + O2 = 2 L-dopaquinone + 2 H2O. The enzyme catalyses L-tyrosine + O2 = L-dopaquinone + H2O. Its pathway is mycotoxin biosynthesis. Tyrosinase; part of the gene cluster that mediates the biosynthesis of the secondary metabolite ustiloxin B, an antimitotic tetrapeptide. First, ustA is processed by the subtilisin-like endoprotease Kex2 that is outside the ustiloxin B gene cluster, at the C-terminal side of Arg-Lys, after transfer to Golgi apparatus through the endoplasmic reticulum (ER). Cleavage by KEX2 generates 16 peptides YAIG-I to YAIG-XVI. To process the precursor peptide further, at least two peptidases are necessary to cleave the N-terminal and C-terminal sides of the Tyr-Ala-Ile-Gly core peptide which serves as backbone for the synthesis of ustiloxin B, through cyclization and modification of the tyrosine with a non-protein coding amino acid, norvaline. One of the two peptidases must be the serine peptidase ustP; and the other pepdidase is probably ustH. Macrocyclization of the core peptide derived from ustA requires the tyrosinase ustQ, as well as the homologous oxidases ustYa and ustYb, and leads to the production of the first cyclization product N-desmethylustiloxin F. For the formation of N-desmethylustiloxin F, three oxidation steps are required, hydroxylation at the benzylic position, hydroxylation at either the aromatic ring of Tyr or beta-position of Ile, and oxidative cyclization. UstQ may catalyze the oxidation of a phenol moiety, whereas the ustYa and ustYb are most likely responsible for the remaining two-step oxidations. N-desmethylustiloxin F is then methylated by ustM to yield ustiloxin F which in turn substrate of the cytochrome P450 monooxygenase ustC which catalyzes the formation of S-deoxyustiloxin H. The flavoprotein monooxygenases ustF1 and ustF2 then participate in the modification of the side chain of S-deoxyustiloxin H, leading to the synthesis of an oxime intermediate, via ustiloxin H. Finally, carboxylative dehydration performed by the cysteine desulfurase-like protein ustD yields ustiloxin B. This Aspergillus flavus (strain ATCC 200026 / FGSC A1120 / IAM 13836 / NRRL 3357 / JCM 12722 / SRRC 167) protein is Tyrosinase ustQ.